The chain runs to 167 residues: Transmembrane protein 229B (167 aa).

Over 1–14 the chain is Cytoplasmic; sequence MASAEPLTALSRWY. Residues 15-35 traverse the membrane as a helical segment; it reads LYAIHGYFCEVMFTAAWEFVV. Topologically, residues 36 to 40 are extracellular; sequence NFNWK. The chain crosses the membrane as a helical span at residues 41 to 61; it reads FPGVTSVWALFIYGTSILIVE. Residues 62–73 are Cytoplasmic-facing; the sequence is RMYLRLRGRCPL. A helical transmembrane segment spans residues 74–94; that stretch reads LLRCLIYTLWTYLWEFTTGFI. The Extracellular segment spans residues 95 to 111; that stretch reads LRQFNACPWDYSQFDFD. A helical membrane pass occupies residues 112-132; the sequence is FMGLITLEYAVPWFCGALLVE. The Cytoplasmic segment spans residues 133-167; the sequence is QFVIRNTLRLRFDKDAEPGEPSGALALANGHVKTD.

It belongs to the TMEM229 family.

It localises to the membrane. In Bos taurus (Bovine), this protein is Transmembrane protein 229B (TMEM229B).